The primary structure comprises 388 residues: tRNA(Ile)-lysidine synthase (388 aa).

51–56 (SGGRDS) is a binding site for ATP.

Belongs to the tRNA(Ile)-lysidine synthase family.

The protein resides in the cytoplasm. The catalysed reaction is cytidine(34) in tRNA(Ile2) + L-lysine + ATP = lysidine(34) in tRNA(Ile2) + AMP + diphosphate + H(+). Functionally, ligates lysine onto the cytidine present at position 34 of the AUA codon-specific tRNA(Ile) that contains the anticodon CAU, in an ATP-dependent manner. Cytidine is converted to lysidine, thus changing the amino acid specificity of the tRNA from methionine to isoleucine. The sequence is that of tRNA(Ile)-lysidine synthase from Bifidobacterium longum (strain DJO10A).